A 235-amino-acid chain; its full sequence is Putative 4'-phosphopantetheinyl transferase HI_0152 (235 aa).

Mg(2+) is bound by residues Asp-112, Glu-114, and Glu-155.

This sequence belongs to the P-Pant transferase superfamily. Gsp/Sfp/HetI/AcpT family. It depends on Mg(2+) as a cofactor.

May transfer the 4'-phosphopantetheine moiety from coenzyme A (CoA) to a serine residue of a carrier protein domain. In Haemophilus influenzae (strain ATCC 51907 / DSM 11121 / KW20 / Rd), this protein is Putative 4'-phosphopantetheinyl transferase HI_0152.